The sequence spans 559 residues: Pentatricopeptide repeat-containing protein At4g38010 (559 aa).

PPR repeat units follow at residues 70–104 (SSFS…GFSP), 105–139 (DMFT…GFYD), 140–170 (DIYV…MPVR), 171–201 (DVVS…MDVE), 203–233 (NLAT…ILKR), 238–268 (SLET…LEKK), 269–304 (DKVS…GIKP), 305–339 (DGHI…GIKW), 340–370 (DTHI…IRSK), 371–405 (NVFT…GFKP), 406–440 (NLVT…EYNL), and 443–473 (KLEH…MPVK). The segment at 478 to 554 (ICGAILSACK…VPGSSYIEKF (77 aa)) is type E motif.

Belongs to the PPR family. PCMP-E subfamily.

The polypeptide is Pentatricopeptide repeat-containing protein At4g38010 (PCMP-E45) (Arabidopsis thaliana (Mouse-ear cress)).